We begin with the raw amino-acid sequence, 420 residues long: D-inositol 3-phosphate glycosyltransferase (420 aa).

Position 13 (histidine 13) interacts with 1D-myo-inositol 3-phosphate. Residues 19–20 (QP) and glycine 27 each bind UDP-N-acetyl-alpha-D-glucosamine. 1D-myo-inositol 3-phosphate is bound by residues 24 to 29 (DAGGMN), lysine 82, tyrosine 115, threonine 139, and arginine 159. UDP-N-acetyl-alpha-D-glucosamine-binding residues include arginine 233, lysine 238, and valine 294. Positions 303, 304, and 306 each coordinate Mg(2+). UDP-N-acetyl-alpha-D-glucosamine contacts are provided by glutamate 316 and glutamate 324. A Mg(2+)-binding site is contributed by threonine 330.

This sequence belongs to the glycosyltransferase group 1 family. MshA subfamily. Homodimer.

The enzyme catalyses 1D-myo-inositol 3-phosphate + UDP-N-acetyl-alpha-D-glucosamine = 1D-myo-inositol 2-acetamido-2-deoxy-alpha-D-glucopyranoside 3-phosphate + UDP + H(+). Functionally, catalyzes the transfer of a N-acetyl-glucosamine moiety to 1D-myo-inositol 3-phosphate to produce 1D-myo-inositol 2-acetamido-2-deoxy-glucopyranoside 3-phosphate in the mycothiol biosynthesis pathway. The chain is D-inositol 3-phosphate glycosyltransferase from Pseudarthrobacter chlorophenolicus (strain ATCC 700700 / DSM 12829 / CIP 107037 / JCM 12360 / KCTC 9906 / NCIMB 13794 / A6) (Arthrobacter chlorophenolicus).